A 117-amino-acid polypeptide reads, in one-letter code: Type II secretion system protein I (117 aa).

Positions 1-6 (MKSKRG) are cleaved as a propeptide — leader sequence. Phe7 carries the N-methylphenylalanine modification. A helical transmembrane segment spans residues 7-27 (FTLLEVLVALAIFATAAISVI).

This sequence belongs to the GSP I family. In terms of assembly, type II secretion is composed of four main components: the outer membrane complex, the inner membrane complex, the cytoplasmic secretion ATPase and the periplasm-spanning pseudopilus. Interacts with core component EpsG. Cleaved by prepilin peptidase. Post-translationally, methylated by prepilin peptidase at the amino group of the N-terminal phenylalanine once the leader sequence is cleaved by prepilin peptidase.

It localises to the cell inner membrane. Its function is as follows. Component of the type II secretion system required for the energy-dependent secretion of extracellular factors such as proteases and toxins from the periplasm. Part of the pseudopilus tip complex that is critical for the recognition and binding of secretion substrates. This Vibrio cholerae serotype O1 (strain ATCC 39315 / El Tor Inaba N16961) protein is Type II secretion system protein I (epsI).